The chain runs to 145 residues: UPF0201 protein SSO1042 (145 aa).

This sequence belongs to the UPF0201 family.

This is UPF0201 protein SSO1042 from Saccharolobus solfataricus (strain ATCC 35092 / DSM 1617 / JCM 11322 / P2) (Sulfolobus solfataricus).